Reading from the N-terminus, the 468-residue chain is Trigger factor (468 aa).

The 82-residue stretch at 162-243 folds into the PPIase FKBP-type domain; it reads GDVLTLDLQA…VSQVAARELP (82 aa). Residues 428–468 are disordered; the sequence is NGEIVDLDDEEDEETEAAEADATEAADAEKADDKAEEKTEG. Acidic residues predominate over residues 432-453; sequence VDLDDEEDEETEAAEADATEAA. Positions 454–468 are enriched in basic and acidic residues; it reads DAEKADDKAEEKTEG.

It belongs to the FKBP-type PPIase family. Tig subfamily.

The protein resides in the cytoplasm. It catalyses the reaction [protein]-peptidylproline (omega=180) = [protein]-peptidylproline (omega=0). Involved in protein export. Acts as a chaperone by maintaining the newly synthesized protein in an open conformation. Functions as a peptidyl-prolyl cis-trans isomerase. This is Trigger factor from Streptomyces coelicolor (strain ATCC BAA-471 / A3(2) / M145).